The following is a 495-amino-acid chain: UDP-N-acetylmuramoyl-L-alanyl-D-glutamate--2,6-diaminopimelate ligase (495 aa).

UDP-N-acetyl-alpha-D-muramoyl-L-alanyl-D-glutamate is bound at residue serine 29. 111–117 (GTNGKTS) provides a ligand contact to ATP. UDP-N-acetyl-alpha-D-muramoyl-L-alanyl-D-glutamate contacts are provided by residues 153-154 (TT), serine 180, glutamine 186, and arginine 188. An N6-carboxylysine modification is found at lysine 220. Meso-2,6-diaminopimelate-binding positions include arginine 384, 408 to 411 (DNPR), glycine 459, and glutamate 463. The Meso-diaminopimelate recognition motif motif lies at 408-411 (DNPR).

The protein belongs to the MurCDEF family. MurE subfamily. Mg(2+) serves as cofactor. Carboxylation is probably crucial for Mg(2+) binding and, consequently, for the gamma-phosphate positioning of ATP.

Its subcellular location is the cytoplasm. The enzyme catalyses UDP-N-acetyl-alpha-D-muramoyl-L-alanyl-D-glutamate + meso-2,6-diaminopimelate + ATP = UDP-N-acetyl-alpha-D-muramoyl-L-alanyl-gamma-D-glutamyl-meso-2,6-diaminopimelate + ADP + phosphate + H(+). The protein operates within cell wall biogenesis; peptidoglycan biosynthesis. Its function is as follows. Catalyzes the addition of meso-diaminopimelic acid to the nucleotide precursor UDP-N-acetylmuramoyl-L-alanyl-D-glutamate (UMAG) in the biosynthesis of bacterial cell-wall peptidoglycan. The polypeptide is UDP-N-acetylmuramoyl-L-alanyl-D-glutamate--2,6-diaminopimelate ligase (Xylella fastidiosa (strain Temecula1 / ATCC 700964)).